Here is a 635-residue protein sequence, read N- to C-terminus: Glycosyltransferase-like protein gnt13 (635 aa).

Topologically, residues 1-18 (MNINTLIINFNKVKRMKN) are cytoplasmic. A helical; Signal-anchor for type II membrane protein transmembrane segment spans residues 19–38 (FLILTLLVVMVVVFLQGPTL). Topologically, residues 39–635 (MINNSGQGMG…PNECFSDHHW (597 aa)) are extracellular. N-linked (GlcNAc...) asparagine glycans are attached at residues N41 and N179. Disordered regions lie at residues 300-358 (NINN…NNID) and 389-458 (NIDN…NNEP). A compositionally biased stretch (low complexity) spans 389 to 456 (NIDNNNSNYN…NNNNNNNNNN (68 aa)). 2 N-linked (GlcNAc...) asparagine glycosylation sites follow: N393 and N535.

This sequence belongs to the glycosyltransferase 8 family. Highly divergent.

It is found in the membrane. This Dictyostelium discoideum (Social amoeba) protein is Glycosyltransferase-like protein gnt13 (gnt13).